Here is a 498-residue protein sequence, read N- to C-terminus: MKLLHERMMHSLARYPRQTAVVDEQDALSYEALELRIREFVAMLCALGVGQGQRILLWAHKSVDLVAVMQAALRLGVVYVPVDPLSPVSRLEKIAGDSQAVLVLCTAARLEELAGSALAQVRSVVLDDPASAGYWRNIDTGSSVVPTLAIQPDDLAYILYTSGSTGVPKGVALSHGNALAFVDWACERYCFQPGERFANHAPLHFDLSVLDIYCALNVGATVCLVPESIAFSPRLLTDFIRQHEISIWYSVPSVLMMMMQDGDLLSDIQDTLRVLLFAGEPFPVKHLRDLRAAYADVRLANLFGPTETNVCTAFEVGAIDPERVLPVPIGTAASGNQVWAQKPDGSRCAVGEEGELVVQGPTVMLGYFAKPAQEGPYKTGDMVRQRPDGNYEYLGRRDDMLKVRGNRIERGEVEAALLAHPQVSEAAVLVVGEGMNAQLWGVLVAHTRDALSLIDLKRHCAQRLPRYMIIDKVLCLDALPRNANGKVDRFALARQVEG.

The protein belongs to the ATP-dependent AMP-binding enzyme family.

The enzyme catalyses holo-[peptidyl-carrier protein] + L-proline + ATP = L-prolyl-[peptidyl-carrier protein] + AMP + diphosphate. Involved in the biosynthesis of pyoluteorin. Catalyzes the conversion of L-proline to L-prolyl-AMP and the transfer of the L-prolyl group to acyl carrier protein PltL. In Pseudomonas fluorescens (strain ATCC BAA-477 / NRRL B-23932 / Pf-5), this protein is L-proline--[L-prolyl-carrier protein] ligase.